The sequence spans 467 residues: UDP-N-acetylmuramate--L-alanine ligase (467 aa).

Residue 114 to 120 coordinates ATP; sequence GTHGKTT.

Belongs to the MurCDEF family.

The protein localises to the cytoplasm. It carries out the reaction UDP-N-acetyl-alpha-D-muramate + L-alanine + ATP = UDP-N-acetyl-alpha-D-muramoyl-L-alanine + ADP + phosphate + H(+). It participates in cell wall biogenesis; peptidoglycan biosynthesis. Cell wall formation. The sequence is that of UDP-N-acetylmuramate--L-alanine ligase from Rhodopseudomonas palustris (strain ATCC BAA-98 / CGA009).